The primary structure comprises 164 residues: MNITIGELIGNFILVAGSFLLLIVLIKKFAWGNITSIFEERAKKISDDIDSAESARKNAEVLEQKREEALAGSREEAATIVETAKETAEKNKASILADTTEEVSRLKQKANQEIAQSKAEALRSIKGDVADLSIDLASKIIGQTLDKEAQSQLIDSYIDKLGDA.

The helical transmembrane segment at 5–25 threads the bilayer; it reads IGELIGNFILVAGSFLLLIVL.

The protein belongs to the ATPase B chain family. As to quaternary structure, F-type ATPases have 2 components, F(1) - the catalytic core - and F(0) - the membrane proton channel. F(1) has five subunits: alpha(3), beta(3), gamma(1), delta(1), epsilon(1). F(0) has three main subunits: a(1), b(2) and c(10-14). The alpha and beta chains form an alternating ring which encloses part of the gamma chain. F(1) is attached to F(0) by a central stalk formed by the gamma and epsilon chains, while a peripheral stalk is formed by the delta and b chains.

Its subcellular location is the cell membrane. In terms of biological role, f(1)F(0) ATP synthase produces ATP from ADP in the presence of a proton or sodium gradient. F-type ATPases consist of two structural domains, F(1) containing the extramembraneous catalytic core and F(0) containing the membrane proton channel, linked together by a central stalk and a peripheral stalk. During catalysis, ATP synthesis in the catalytic domain of F(1) is coupled via a rotary mechanism of the central stalk subunits to proton translocation. Its function is as follows. Component of the F(0) channel, it forms part of the peripheral stalk, linking F(1) to F(0). The protein is ATP synthase subunit b of Streptococcus gordonii (strain Challis / ATCC 35105 / BCRC 15272 / CH1 / DL1 / V288).